A 96-amino-acid polypeptide reads, in one-letter code: Co-chaperonin GroES (96 aa).

The protein belongs to the GroES chaperonin family. Heptamer of 7 subunits arranged in a ring. Interacts with the chaperonin GroEL.

The protein localises to the cytoplasm. In terms of biological role, together with the chaperonin GroEL, plays an essential role in assisting protein folding. The GroEL-GroES system forms a nano-cage that allows encapsulation of the non-native substrate proteins and provides a physical environment optimized to promote and accelerate protein folding. GroES binds to the apical surface of the GroEL ring, thereby capping the opening of the GroEL channel. The polypeptide is Co-chaperonin GroES (Albidiferax ferrireducens (strain ATCC BAA-621 / DSM 15236 / T118) (Rhodoferax ferrireducens)).